A 369-amino-acid polypeptide reads, in one-letter code: Protein-glutamate methylesterase/protein-glutamine glutaminase (369 aa).

The region spanning 6 to 122 (RAVVADDSHF…SMEMSRLKDQ (117 aa)) is the Response regulatory domain. 4-aspartylphosphate is present on D56. Positions 136–178 (GATGSRSGTGSDSGTAPTTAGGSATDRRGTGGSSGQTTYVANP) are disordered. The span at 138-159 (TGSRSGTGSDSGTAPTTAGGSA) shows a compositional bias: low complexity. Residues 173-367 (TYVANPTLVI…DGVIDTITTE (195 aa)) form the CheB-type methylesterase domain. Residues S185, H212, and D309 contribute to the active site.

The protein belongs to the CheB family. Post-translationally, phosphorylated by CheA. Phosphorylation of the N-terminal regulatory domain activates the methylesterase activity.

It localises to the cytoplasm. It catalyses the reaction [protein]-L-glutamate 5-O-methyl ester + H2O = L-glutamyl-[protein] + methanol + H(+). The enzyme catalyses L-glutaminyl-[protein] + H2O = L-glutamyl-[protein] + NH4(+). In terms of biological role, involved in chemotaxis. Part of a chemotaxis signal transduction system that modulates chemotaxis in response to various stimuli. Catalyzes the demethylation of specific methylglutamate residues introduced into the chemoreceptors (methyl-accepting chemotaxis proteins or MCP) by CheR. Also mediates the irreversible deamidation of specific glutamine residues to glutamic acid. In Haloarcula marismortui (strain ATCC 43049 / DSM 3752 / JCM 8966 / VKM B-1809) (Halobacterium marismortui), this protein is Protein-glutamate methylesterase/protein-glutamine glutaminase.